The primary structure comprises 133 residues: Small ribosomal subunit protein uS8 (133 aa).

Belongs to the universal ribosomal protein uS8 family. As to quaternary structure, part of the 30S ribosomal subunit. Contacts proteins S5 and S12.

In terms of biological role, one of the primary rRNA binding proteins, it binds directly to 16S rRNA central domain where it helps coordinate assembly of the platform of the 30S subunit. This chain is Small ribosomal subunit protein uS8, found in Synechococcus sp. (strain RCC307).